The sequence spans 261 residues: Antiviral protein S (261 aa).

Cystine bridges form between Cys34/Cys258 and Cys84/Cys105. Glu175 is a catalytic residue.

It belongs to the ribosome-inactivating protein family. Type 1 RIP subfamily.

It carries out the reaction Endohydrolysis of the N-glycosidic bond at one specific adenosine on the 28S rRNA.. Its function is as follows. Inhibits viral infection of plants, and protein synthesis in vitro. This chain is Antiviral protein S, found in Phytolacca americana (American pokeweed).